The primary structure comprises 191 residues: MEIKPITTYTGKVVPLFNDNIDTDQIIPKVHLKRISKSGFGPFAFDEWRYLDDGSDNPDFNPNKPEYKDASILITGENFGCGSSREHAAWAIKDYGFDIIIAGSYSDIFYMNCTKNAMLPIVLDKEAREYLADAGEITIDLPNQTVSTKDKSFDFQIDETWKKKLVNGLDDIDITLQFEDAIKNYEAAKTY.

It belongs to the LeuD family. LeuD type 1 subfamily. As to quaternary structure, heterodimer of LeuC and LeuD.

It carries out the reaction (2R,3S)-3-isopropylmalate = (2S)-2-isopropylmalate. It participates in amino-acid biosynthesis; L-leucine biosynthesis; L-leucine from 3-methyl-2-oxobutanoate: step 2/4. Functionally, catalyzes the isomerization between 2-isopropylmalate and 3-isopropylmalate, via the formation of 2-isopropylmaleate. This Staphylococcus saprophyticus subsp. saprophyticus (strain ATCC 15305 / DSM 20229 / NCIMB 8711 / NCTC 7292 / S-41) protein is 3-isopropylmalate dehydratase small subunit.